Reading from the N-terminus, the 264-residue chain is Proteasome assembly chaperone 2 (264 aa).

A Phosphothreonine modification is found at threonine 137.

It belongs to the PSMG2 family. In terms of assembly, forms a heterodimer with PSMG1. The PSMG1-PSMG2 heterodimer interacts directly with the PSMA5 and PSMA7 proteasome alpha subunits. In terms of processing, degraded by the proteasome upon completion of 20S proteasome maturation.

The protein resides in the nucleus. Functionally, chaperone protein which promotes assembly of the 20S proteasome as part of a heterodimer with PSMG1. The PSMG1-PSMG2 heterodimer binds to the PSMA5 and PSMA7 proteasome subunits, promotes assembly of the proteasome alpha subunits into the heteroheptameric alpha ring and prevents alpha ring dimerization. The chain is Proteasome assembly chaperone 2 from Bos taurus (Bovine).